The sequence spans 501 residues: O-phosphoseryl-tRNA(Sec) selenium transferase (501 aa).

The tract at residues 1 to 44 is tetramerization; it reads MNRESFAAGERLVSPAYVRQGCEARRSHEHLIRLLLEKGKCPEN. Serine 14 carries the phosphoserine modification. Residue arginine 75 participates in pyridoxal 5'-phosphate binding. The segment at 96–106 is phosphate loop (P-loop); sequence GRSGDISAVQP. Substrate-binding residues include arginine 97, serine 98, and glutamine 105. Arginine 271 contributes to the tRNA binding site. Residue lysine 284 is modified to N6-(pyridoxal phosphate)lysine. Arginine 313 provides a ligand contact to substrate. TRNA-binding residues include arginine 398 and lysine 463.

It belongs to the SepSecS family. Homotetramer formed by a catalytic dimer and a non-catalytic dimer serving as a binding platform that orients tRNASec for catalysis. Each tetramer binds the CCA ends of two tRNAs which point to the active sites of the catalytic dimer. The cofactor is pyridoxal 5'-phosphate.

The protein localises to the cytoplasm. It carries out the reaction O-phospho-L-seryl-tRNA(Sec) + selenophosphate + H2O = L-selenocysteinyl-tRNA(Sec) + 2 phosphate. It functions in the pathway aminoacyl-tRNA biosynthesis; selenocysteinyl-tRNA(Sec) biosynthesis; selenocysteinyl-tRNA(Sec) from L-seryl-tRNA(Sec) (archaeal/eukaryal route): step 2/2. Converts O-phosphoseryl-tRNA(Sec) to selenocysteinyl-tRNA(Sec) required for selenoprotein biosynthesis. The protein is O-phosphoseryl-tRNA(Sec) selenium transferase (SEPSECS) of Pongo abelii (Sumatran orangutan).